A 367-amino-acid polypeptide reads, in one-letter code: C-C chemokine receptor type 9 (367 aa).

Residues 1 to 46 (MVPTEATSLILNPSDDYGYDGTPPMEYDTNLTDYFCEKSHVRQFAG) are Extracellular-facing. N-linked (GlcNAc...) asparagine glycosylation occurs at Asn30. Intrachain disulfides connect Cys36/Cys287 and Cys117/Cys196. A helical membrane pass occupies residues 47 to 72 (HFLPPLYWLVFIVGAVGNSLVILVYW). Residues 73 to 83 (YCTRVKTMTDM) lie on the Cytoplasmic side of the membrane. A helical membrane pass occupies residues 84 to 107 (FLLNLAIADLLFLTTLPFWAIAAA). Over 108–118 (DQWKFQTFMCK) the chain is Extracellular. The chain crosses the membrane as a helical span at residues 119-148 (VVNSMYKMNFYSCVLLIMCISVDRYIAIAQ). Residues 149–157 (AMRAQMWRQ) are Cytoplasmic-facing. Residues 158 to 183 (KRLLYSKMVCFTIWVMAAALCLPELL) traverse the membrane as a helical segment. Residues 184–206 (YSQVKEEHGTAICTVVYSSNEST) lie on the Extracellular side of the membrane. Asn203 is a glycosylation site (N-linked (GlcNAc...) asparagine). The chain crosses the membrane as a helical span at residues 207–241 (KLKSAVLTLKVTLGFFLPFVVMACCYAIIIHTLIR). The Cytoplasmic segment spans residues 242 to 246 (AKKSS). The chain crosses the membrane as a helical span at residues 247–281 (KHKALKVTITVLTVFVLSQFPHNCVLLVQTIDAYA). Residues 282–288 (TFISSCA) lie on the Extracellular side of the membrane. The chain crosses the membrane as a helical span at residues 289–319 (LSIKIDICFQVTQTVAFFHSCLNPVLYVFVG). At 320–367 (ERFRRDLVKTLKNLGCISQAQWVSFTRREGSLKLSSMLLETTSGALSF) the chain is on the cytoplasmic side.

This sequence belongs to the G-protein coupled receptor 1 family.

The protein resides in the cell membrane. Its function is as follows. Receptor for chemokine SCYA25/TECK. Subsequently transduces a signal by increasing the intracellular calcium ions level. In Ovis aries (Sheep), this protein is C-C chemokine receptor type 9 (CCR9).